The following is a 328-amino-acid chain: Arabinose 5-phosphate isomerase KdsD (328 aa).

Residues 42-184 (CEKMFWCKGK…AVALLKARGF (143 aa)) form the SIS domain. Residues 75–76 (GT), histidine 82, histidine 88, 114–123 (ALIPVLKRLH), 148–150 (KVA), threonine 222, and aspartate 275 contribute to the substrate site. Histidine 82 contacts Zn(2+). The 59-residue stretch at 210–268 (MHTGDEIPHVKKTASLRDALLEVTRKNLGMTVICDDNMMIEGIFTDGDLRRVFDMGVDV) folds into the CBS 1 domain. Residues 277 to 328 (MTPGGIRVRPGILAVEALNLMQSRHITSVMVADGDHLLGVLHMHDLLRAGVV) form the CBS 2 domain.

It belongs to the SIS family. GutQ/KpsF subfamily. As to quaternary structure, homotetramer.

It carries out the reaction D-arabinose 5-phosphate = D-ribulose 5-phosphate. The protein operates within carbohydrate biosynthesis; 3-deoxy-D-manno-octulosonate biosynthesis; 3-deoxy-D-manno-octulosonate from D-ribulose 5-phosphate: step 1/3. It functions in the pathway bacterial outer membrane biogenesis; lipopolysaccharide biosynthesis. Its activity is regulated as follows. Completely inhibited by 10 uM of nickel, copper, cadmium and mercury ions. Inhibited by zinc with an IC(50) of 1-3 uM. Metal ion inhibition may be a mechanism to control activity in vivo. Involved in the biosynthesis of 3-deoxy-D-manno-octulosonate (KDO), a unique 8-carbon sugar component of lipopolysaccharides (LPSs). KdsD is not essential in the KDO biosynthesis and can be substituted by GutQ. Catalyzes the reversible aldol-ketol isomerization between D-ribulose 5-phosphate (Ru5P) and D-arabinose 5-phosphate (A5P). The chain is Arabinose 5-phosphate isomerase KdsD (kdsD) from Escherichia coli (strain K12).